The following is a 180-amino-acid chain: Alkyl hydroperoxide reductase AhpD (180 aa).

The active-site Proton donor is the Cys131. Cys131 and Cys134 are oxidised to a cystine. Cys134 (cysteine sulfenic acid (-SOH) intermediate) is an active-site residue.

It belongs to the AhpD family.

The enzyme catalyses N(6)-[(R)-dihydrolipoyl]-L-lysyl-[lipoyl-carrier protein] + a hydroperoxide = N(6)-[(R)-lipoyl]-L-lysyl-[lipoyl-carrier protein] + an alcohol + H2O. Antioxidant protein with alkyl hydroperoxidase activity. Required for the reduction of the AhpC active site cysteine residues and for the regeneration of the AhpC enzyme activity. The polypeptide is Alkyl hydroperoxide reductase AhpD (Beijerinckia indica subsp. indica (strain ATCC 9039 / DSM 1715 / NCIMB 8712)).